Consider the following 201-residue polypeptide: MAVYKVSFLAHLLVLGMYLLVSTVEHANACTKECGNLGYGICPGSEGSPENPICTNCCSGYKGCNYYYANGTFICEGTSDPKNPNICPSYCDPQIAYSKCPRSEGKTIIYPTGCTTCCTGYKGCYYFGQDGEFVCEGESIEPKGCTKECDPRVAYMTCPSSGLAKLNQVCVNCCSAGEGCKLYDNDGSLLCTGEPQSISTA.

Positions 1-23 are cleaved as a signal peptide; it reads MAVYKVSFLAHLLVLGMYLLVST. Tandem repeats lie at residues 27 to 83, 84 to 143, and 144 to 199. Cystine bridges form between C30/C118, C34/C114, C42/C124, C54/C91, C57/C75, C58/C87, C64/C100, and C117/C135.

This sequence belongs to the protease inhibitor I20 (potato type II proteinase inhibitor) family.

This Solanum lycopersicum (Tomato) protein is Proteinase inhibitor type-2 CEVI57 (CEVI57).